A 189-amino-acid polypeptide reads, in one-letter code: Putative dihydrofolate reductase (189 aa).

In terms of domain architecture, DHFR spans 3–185 (KMNLIVAMDA…LKFEFCKWKV (183 aa)). NADP(+)-binding positions include Ala-9 and 15–21 (GIGKNGV). Residue 29 to 34 (DMQYFA) coordinates substrate. Residue 53 to 55 (RKC) coordinates NADP(+). Arg-69 serves as a coordination point for substrate. Residues 75–77 (SRQ) and 115–122 (GGAEIYDL) contribute to the NADP(+) site.

It belongs to the dihydrofolate reductase family.

It catalyses the reaction (6S)-5,6,7,8-tetrahydrofolate + NADP(+) = 7,8-dihydrofolate + NADPH + H(+). It participates in cofactor biosynthesis; tetrahydrofolate biosynthesis; 5,6,7,8-tetrahydrofolate from 7,8-dihydrofolate: step 1/1. Functionally, key enzyme in folate metabolism. Catalyzes an essential reaction for de novo glycine and purine synthesis, and for DNA precursor synthesis. The chain is Putative dihydrofolate reductase (dhfr-1) from Caenorhabditis elegans.